We begin with the raw amino-acid sequence, 469 residues long: 3-isopropylmalate dehydratase large subunit (469 aa).

[4Fe-4S] cluster-binding residues include Cys-349, Cys-410, and Cys-413.

This sequence belongs to the aconitase/IPM isomerase family. LeuC type 1 subfamily. Heterodimer of LeuC and LeuD. Requires [4Fe-4S] cluster as cofactor.

It carries out the reaction (2R,3S)-3-isopropylmalate = (2S)-2-isopropylmalate. It participates in amino-acid biosynthesis; L-leucine biosynthesis; L-leucine from 3-methyl-2-oxobutanoate: step 2/4. Its function is as follows. Catalyzes the isomerization between 2-isopropylmalate and 3-isopropylmalate, via the formation of 2-isopropylmaleate. The sequence is that of 3-isopropylmalate dehydratase large subunit from Neisseria meningitidis serogroup B (strain ATCC BAA-335 / MC58).